A 163-amino-acid polypeptide reads, in one-letter code: NAD(P)H-quinone oxidoreductase subunit I, chloroplastic (163 aa).

2 4Fe-4S ferredoxin-type domains span residues 55-84 (GRIH…VDWK) and 95-124 (LNYS…MTEE). Positions 64, 67, 70, 74, 104, 107, 110, and 114 each coordinate [4Fe-4S] cluster.

Belongs to the complex I 23 kDa subunit family. In terms of assembly, NDH is composed of at least 16 different subunits, 5 of which are encoded in the nucleus. [4Fe-4S] cluster is required as a cofactor.

The protein localises to the plastid. The protein resides in the chloroplast thylakoid membrane. It catalyses the reaction a plastoquinone + NADH + (n+1) H(+)(in) = a plastoquinol + NAD(+) + n H(+)(out). The enzyme catalyses a plastoquinone + NADPH + (n+1) H(+)(in) = a plastoquinol + NADP(+) + n H(+)(out). Its function is as follows. NDH shuttles electrons from NAD(P)H:plastoquinone, via FMN and iron-sulfur (Fe-S) centers, to quinones in the photosynthetic chain and possibly in a chloroplast respiratory chain. The immediate electron acceptor for the enzyme in this species is believed to be plastoquinone. Couples the redox reaction to proton translocation, and thus conserves the redox energy in a proton gradient. In Glycine max (Soybean), this protein is NAD(P)H-quinone oxidoreductase subunit I, chloroplastic.